The sequence spans 359 residues: L-seryl-tRNA(Sec) kinase (359 aa).

ATP is bound at residue glycine 25 to serine 32.

It belongs to the L-seryl-tRNA(Sec) kinase family. It depends on Mg(2+) as a cofactor.

The enzyme catalyses L-seryl-tRNA(Sec) + ATP = O-phospho-L-seryl-tRNA(Sec) + ADP. The protein operates within aminoacyl-tRNA biosynthesis; selenocysteinyl-tRNA(Sec) biosynthesis; selenocysteinyl-tRNA(Sec) from L-seryl-tRNA(Sec) (archaeal/eukaryal route): step 1/2. Functionally, specifically phosphorylates seryl-tRNA(Sec) to O-phosphoseryl-tRNA(Sec), an activated intermediate for selenocysteine biosynthesis. No activity with other tRNAs has been detected. The polypeptide is L-seryl-tRNA(Sec) kinase (Pstk) (Mus musculus (Mouse)).